The chain runs to 643 residues: 1-deoxy-D-xylulose-5-phosphate synthase (643 aa).

Thiamine diphosphate-binding positions include His-72 and 113 to 115 (GHA). Residue Asp-144 participates in Mg(2+) binding. Thiamine diphosphate is bound by residues 145-146 (GA), Asn-174, Tyr-287, and Glu-370. Residue Asn-174 participates in Mg(2+) binding.

The protein belongs to the transketolase family. DXPS subfamily. As to quaternary structure, homodimer. The cofactor is Mg(2+). Requires thiamine diphosphate as cofactor.

The enzyme catalyses D-glyceraldehyde 3-phosphate + pyruvate + H(+) = 1-deoxy-D-xylulose 5-phosphate + CO2. Its pathway is metabolic intermediate biosynthesis; 1-deoxy-D-xylulose 5-phosphate biosynthesis; 1-deoxy-D-xylulose 5-phosphate from D-glyceraldehyde 3-phosphate and pyruvate: step 1/1. Its function is as follows. Catalyzes the acyloin condensation reaction between C atoms 2 and 3 of pyruvate and glyceraldehyde 3-phosphate to yield 1-deoxy-D-xylulose-5-phosphate (DXP). This is 1-deoxy-D-xylulose-5-phosphate synthase from Prochlorococcus marinus (strain SARG / CCMP1375 / SS120).